Consider the following 277-residue polypeptide: MENTENSVDSKSIKNSEPKIIHGSKSVDSGISLDNSYKMDYPEMGLCIIINNKNFHKSTGMASRSGTDVDAANLRETFMNLKYEVRNKNDLTREEIVELMRNVSKEDHSKRSSFVCVLLSHGEEGIIFGTNGPVDLKKITSFFRGDCCRSLTGKPKLFIIQACRGTELDCGIETDSGVDDDMACHKIPVEADFLYAYSTAPGYYSWRNSRDGSWFIQSLCAMLKQYAHKLEFMHILTRVNRKVATEFESSSFDATFHAKKQIPCIVSMLTKELYFYQ.

Met1 is modified (N-acetylmethionine). 2 consecutive propeptides follow at residues 1 to 9 and 10 to 28; these read MENTENSVD and SKSIKNSEPKIIHGSKSVD. Residues 1–10 are compositionally biased toward polar residues; the sequence is MENTENSVDS. The tract at residues 1–25 is disordered; that stretch reads MENTENSVDSKSIKNSEPKIIHGSK. Residue Lys11 is modified to N6-acetyllysine. The segment covering 11–20 has biased composition (basic and acidic residues); the sequence is KSIKNSEPKI. Ser26 is subject to Phosphoserine. Residues His121 and Cys163 contribute to the active site. Cys163 is subject to S-nitrosocysteine; in inhibited form.

It belongs to the peptidase C14A family. In terms of assembly, heterotetramer that consists of two anti-parallel arranged heterodimers, each one formed by a 17 kDa (p17) and a 12 kDa (p12) subunit. Interacts with BIRC6/bruce. Cleavage by granzyme B, caspase-6, caspase-8 and caspase-10 generates the two active subunits. Additional processing of the propeptides is likely due to the autocatalytic activity of the activated protease. Active heterodimers between the small subunit of caspase-7 protease and the large subunit of caspase-3 also occur and vice versa. In terms of processing, S-nitrosylated on its catalytic site cysteine in unstimulated cell lines and denitrosylated upon activation of the Fas apoptotic pathway, associated with an increase in intracellular caspase activity. Fas therefore activates caspase-3 not only by inducing the cleavage of the caspase zymogen to its active subunits, but also by stimulating the denitrosylation of its active site thiol. Post-translationally, ubiquitinated by BIRC6; this activity is inhibited by DIABLO/SMAC.

Its subcellular location is the cytoplasm. The enzyme catalyses Strict requirement for an Asp residue at positions P1 and P4. It has a preferred cleavage sequence of Asp-Xaa-Xaa-Asp-|- with a hydrophobic amino-acid residue at P2 and a hydrophilic amino-acid residue at P3, although Val or Ala are also accepted at this position.. With respect to regulation, inhibited by BIRC6; following inhibition of BIRC6-caspase binding by DIABLO/SMAC, BIRC6 is subjected to caspase cleavage, leading to an increase in active caspases. Its function is as follows. Involved in the activation cascade of caspases responsible for apoptosis execution. At the onset of apoptosis, it proteolytically cleaves poly(ADP-ribose) polymerase PARP1 at a '216-Asp-|-Gly-217' bond. Cleaves and activates sterol regulatory element binding proteins (SREBPs) between the basic helix-loop-helix leucine zipper domain and the membrane attachment domain. Cleaves and activates caspase-6, -7 and -9 (CASP6, CASP7 and CASP9, respectively). Cleaves and inactivates interleukin-18 (IL18). Triggers cell adhesion in sympathetic neurons through RET cleavage. Cleaves IL-1 beta between an Asp and an Ala, releasing the mature cytokine which is involved in a variety of inflammatory processes. Cleaves and inhibits serine/threonine-protein kinase AKT1 in response to oxidative stress. Acts as an inhibitor of type I interferon production during virus-induced apoptosis by mediating cleavage of antiviral proteins CGAS, IRF3 and MAVS, thereby preventing cytokine overproduction. Also involved in pyroptosis by mediating cleavage and activation of gasdermin-E (GSDME). Cleaves XRCC4 and phospholipid scramblase proteins XKR4, XKR8 and XKR9, leading to promote phosphatidylserine exposure on apoptotic cell surface. Cleaves BIRC6 following inhibition of BIRC6-caspase binding by DIABLO/SMAC. This Saimiri boliviensis boliviensis (Bolivian squirrel monkey) protein is Caspase-3 (CASP3).